The sequence spans 126 residues: Adrenocorticotropic hormone receptor (126 aa).

The chain crosses the membrane as a helical span at residues 1–25; that stretch reads VLPEEIFFTISIVGVLENLIVLLAV. The Cytoplasmic portion of the chain corresponds to 26-34; that stretch reads FKNKNLQAP. The chain crosses the membrane as a helical span at residues 35–55; it reads MYFFICSLAISDMLGSLYKIL. The Extracellular segment spans residues 56-80; sequence ENILIILRNMGYLKPRGSFETTADD. Residues 81-102 traverse the membrane as a helical segment; sequence IIDSLFVLSLLGAIFSLSVIAA. At 103-123 the chain is on the cytoplasmic side; it reads DRYITIFHALRYHSIVTMRRT. A helical membrane pass occupies residues 124 to 126; the sequence is VVV.

This sequence belongs to the G-protein coupled receptor 1 family. Interacts with MRAP; increasing ligand-sensitivity and generation of cAMP. Interacts with MRAP2; competing with MRAP for binding to MC2R and impairing the binding of corticotropin (ACTH).

Its subcellular location is the cell membrane. Its function is as follows. Receptor for corticotropin (ACTH). This receptor is mediated by G proteins (G(s)) which activate adenylate cyclase (cAMP). This Papio hamadryas (Hamadryas baboon) protein is Adrenocorticotropic hormone receptor (MC2R).